Consider the following 132-residue polypeptide: MSMQDTVGDMLTRIRNAQMANKVSVAMPNSKLRKSIADLLVNEGYVASAVVTEENNNKATLTIVLKYFEGKAVIETIQRFSRPGLRQHRGKDAIPTVKQGMGVAIVSTSQGIMTDRAARAAGIGGEVVAFVA.

The protein belongs to the universal ribosomal protein uS8 family. In terms of assembly, part of the 30S ribosomal subunit. Contacts proteins S5 and S12.

Its function is as follows. One of the primary rRNA binding proteins, it binds directly to 16S rRNA central domain where it helps coordinate assembly of the platform of the 30S subunit. The polypeptide is Small ribosomal subunit protein uS8 (Psychrobacter cryohalolentis (strain ATCC BAA-1226 / DSM 17306 / VKM B-2378 / K5)).